A 390-amino-acid polypeptide reads, in one-letter code: Putative methylesterase 11, chloroplastic (390 aa).

The transit peptide at 1–46 (MGNLCSLFTPPKPVKKRKPITKRQSSIGASSSGSGLNSNRWNNRVR) directs the protein to the chloroplast. Disordered stretches follow at residues 1–52 (MGNL…SSRR) and 94–119 (QGSC…DPLL). Residues 25-48 (SSIGASSSGSGLNSNRWNNRVRSS) are compositionally biased toward low complexity. Residues 94–104 (QGSCSKKNQLP) show a composition bias toward polar residues. Positions 105 to 114 (RSSSSRSRSS) are enriched in low complexity. The AB hydrolase-1 domain maps to 137–241 (NHFVLVHGGS…KAVFLAAAML (105 aa)). Asp213 acts as the Acyl-ester intermediate in catalysis. Active-site charge relay system residues include Asp339 and His367.

It belongs to the AB hydrolase superfamily. Methylesterase family.

It is found in the plastid. The protein localises to the chloroplast. Its function is as follows. Putative methylesterase. This chain is Putative methylesterase 11, chloroplastic, found in Arabidopsis thaliana (Mouse-ear cress).